The following is a 454-amino-acid chain: tRNA modification GTPase MnmE (454 aa).

(6S)-5-formyl-5,6,7,8-tetrahydrofolate is bound by residues Arg-23, Glu-80, and Lys-120. Positions 216–377 constitute a TrmE-type G domain; sequence GMKVVIAGRP…LRNHLKQSMG (162 aa). Position 226 (Asn-226) interacts with K(+). Residues 226–231, 245–251, 270–273, 335–338, and 358–360 contribute to the GTP site; these read NAGKSS, TDIAGTT, DTAG, NKAD, and SAR. Position 230 (Ser-230) interacts with Mg(2+). Residues Thr-245, Ile-247, and Thr-250 each coordinate K(+). Residue Thr-251 participates in Mg(2+) binding. Lys-454 serves as a coordination point for (6S)-5-formyl-5,6,7,8-tetrahydrofolate.

It belongs to the TRAFAC class TrmE-Era-EngA-EngB-Septin-like GTPase superfamily. TrmE GTPase family. Homodimer. Heterotetramer of two MnmE and two MnmG subunits. The cofactor is K(+).

Its subcellular location is the cytoplasm. Exhibits a very high intrinsic GTPase hydrolysis rate. Involved in the addition of a carboxymethylaminomethyl (cmnm) group at the wobble position (U34) of certain tRNAs, forming tRNA-cmnm(5)s(2)U34. This is tRNA modification GTPase MnmE from Salmonella typhimurium (strain LT2 / SGSC1412 / ATCC 700720).